The chain runs to 414 residues: Putative nickel insertion protein (414 aa).

The tract at residues 70–91 is disordered; the sequence is ATHHDHDHSQDQTHHHHADHAP.

This sequence belongs to the LarC family.

The chain is Putative nickel insertion protein from Picosynechococcus sp. (strain ATCC 27264 / PCC 7002 / PR-6) (Agmenellum quadruplicatum).